The chain runs to 195 residues: Guanylate kinase (195 aa).

The 180-residue stretch at 12–191 folds into the Guanylate kinase-like domain; that stretch reads GLIILISGPS…TIEDIKQLIL (180 aa). 19–26 is an ATP binding site; the sequence is GPSGVGKG.

Belongs to the guanylate kinase family.

The protein localises to the cytoplasm. It carries out the reaction GMP + ATP = GDP + ADP. Its function is as follows. Essential for recycling GMP and indirectly, cGMP. The polypeptide is Guanylate kinase (gmk) (Mycoplasmoides gallisepticum (strain R(low / passage 15 / clone 2)) (Mycoplasma gallisepticum)).